The following is a 1085-amino-acid chain: Error-prone DNA polymerase 2 (1085 aa).

The tract at residues 1040–1066 is disordered; it reads AGRGDEFAHGGGGPDSRDRQKPVVPRD.

Belongs to the DNA polymerase type-C family. DnaE2 subfamily.

It localises to the cytoplasm. The catalysed reaction is DNA(n) + a 2'-deoxyribonucleoside 5'-triphosphate = DNA(n+1) + diphosphate. Functionally, DNA polymerase involved in damage-induced mutagenesis and translesion synthesis (TLS). It is not the major replicative DNA polymerase. The polypeptide is Error-prone DNA polymerase 2 (Agrobacterium fabrum (strain C58 / ATCC 33970) (Agrobacterium tumefaciens (strain C58))).